Reading from the N-terminus, the 206-residue chain is Large ribosomal subunit protein uL4 (206 aa).

The segment at 63-96 is disordered; that stretch reads MYKQKGTGRARHHSARAPQFRGGGKAHGPVVRSH. Residues 64 to 77 show a composition bias toward basic residues; the sequence is YKQKGTGRARHHSA.

Belongs to the universal ribosomal protein uL4 family. As to quaternary structure, part of the 50S ribosomal subunit.

One of the primary rRNA binding proteins, this protein initially binds near the 5'-end of the 23S rRNA. It is important during the early stages of 50S assembly. It makes multiple contacts with different domains of the 23S rRNA in the assembled 50S subunit and ribosome. In terms of biological role, forms part of the polypeptide exit tunnel. The polypeptide is Large ribosomal subunit protein uL4 (Allorhizobium ampelinum (strain ATCC BAA-846 / DSM 112012 / S4) (Agrobacterium vitis (strain S4))).